Consider the following 119-residue polypeptide: Protein TusC (119 aa).

The protein belongs to the DsrF/TusC family. As to quaternary structure, heterohexamer, formed by a dimer of trimers. The hexameric TusBCD complex contains 2 copies each of TusB, TusC and TusD. The TusBCD complex interacts with TusE.

It localises to the cytoplasm. In terms of biological role, part of a sulfur-relay system required for 2-thiolation of 5-methylaminomethyl-2-thiouridine (mnm(5)s(2)U) at tRNA wobble positions. The protein is Protein TusC of Pectobacterium carotovorum subsp. carotovorum (strain PC1).